A 917-amino-acid polypeptide reads, in one-letter code: Translation initiation factor IF-2 (917 aa).

A disordered region spans residues 1–312 (MEEQKSIKET…KGGREENENT (312 aa)). Positions 20 to 30 (TKKKLVIKKKA) are enriched in basic residues. Polar residues predominate over residues 41-59 (PGAQGQTTATEAKQSSPAS). 2 stretches are compositionally biased toward basic and acidic residues: residues 60–76 (SDKK…EAKR) and 95–118 (RPDR…RKPE). Composition is skewed to gly residues over residues 132–141 (SGGGQGGGNQ), 167–256 (QTGG…GYQG), and 281–293 (APGG…GPGG). The segment covering 297–312 (RVFDKEKGGREENENT) has biased composition (basic and acidic residues). Positions 414–587 (TRPPVVTIMG…ELLDHKANPK (174 aa)) constitute a tr-type G domain. The tract at residues 423 to 430 (GHVDHGKT) is G1. 423 to 430 (GHVDHGKT) provides a ligand contact to GTP. The tract at residues 448–452 (GITQH) is G2. The tract at residues 469-472 (DTPG) is G3. GTP-binding positions include 469–473 (DTPGH) and 523–526 (NKID). Residues 523-526 (NKID) are G4. A G5 region spans residues 559-561 (SAK).

It belongs to the TRAFAC class translation factor GTPase superfamily. Classic translation factor GTPase family. IF-2 subfamily.

It localises to the cytoplasm. In terms of biological role, one of the essential components for the initiation of protein synthesis. Protects formylmethionyl-tRNA from spontaneous hydrolysis and promotes its binding to the 30S ribosomal subunits. Also involved in the hydrolysis of GTP during the formation of the 70S ribosomal complex. The chain is Translation initiation factor IF-2 from Leptospira biflexa serovar Patoc (strain Patoc 1 / ATCC 23582 / Paris).